The sequence spans 191 residues: Hypoxanthine/guanine phosphoribosyltransferase (191 aa).

It belongs to the purine/pyrimidine phosphoribosyltransferase family. Archaeal HPRT subfamily. As to quaternary structure, homodimer.

The protein localises to the cytoplasm. It carries out the reaction IMP + diphosphate = hypoxanthine + 5-phospho-alpha-D-ribose 1-diphosphate. It catalyses the reaction GMP + diphosphate = guanine + 5-phospho-alpha-D-ribose 1-diphosphate. Its pathway is purine metabolism; IMP biosynthesis via salvage pathway; IMP from hypoxanthine: step 1/1. Functionally, catalyzes a salvage reaction resulting in the formation of IMP that is energically less costly than de novo synthesis. This is Hypoxanthine/guanine phosphoribosyltransferase from Methanocella paludicola (strain DSM 17711 / JCM 13418 / NBRC 101707 / SANAE).